A 311-amino-acid polypeptide reads, in one-letter code: uncharacterized protein (311 aa).

Belongs to the peptidase C1 family.

This is an uncharacterized protein from Acanthamoeba polyphaga mimivirus (APMV).